A 129-amino-acid chain; its full sequence is Defensin-like protein 182 (129 aa).

Residues 1–26 (METVTSLVFIVNLLIIFTSVVNQARG) form the signal peptide. Cystine bridges form between Cys29/Cys70, Cys36/Cys55, Cys39/Cys64, Cys43/Cys66, Cys83/Cys129, Cys94/Cys114, Cys99/Cys123, and Cys103/Cys125.

This sequence belongs to the DEFL family.

The protein localises to the secreted. Its function is as follows. Confers broad-spectrum resistance to pathogens. The polypeptide is Defensin-like protein 182 (PDF3.2) (Arabidopsis thaliana (Mouse-ear cress)).